Here is an 84-residue protein sequence, read N- to C-terminus: RNA-binding protein Hfq (84 aa).

The region spanning 10 to 69 is the Sm domain; it reads EPFLNTLRREHVPVSIYLVNGIKLQGQIESFDQYVVLLRNTVTQMVFKHAISTIVPGRAV.

This sequence belongs to the Hfq family. As to quaternary structure, homohexamer.

RNA chaperone that binds small regulatory RNA (sRNAs) and mRNAs to facilitate mRNA translational regulation in response to envelope stress, environmental stress and changes in metabolite concentrations. Also binds with high specificity to tRNAs. This is RNA-binding protein Hfq from Verminephrobacter eiseniae (strain EF01-2).